Reading from the N-terminus, the 217-residue chain is Glycine betaine/carnitine/choline transport system permease protein OpuCB (217 aa).

In terms of domain architecture, ABC transmembrane type-1 spans Thr-19 to Leu-198. Helical transmembrane passes span Leu-23–Ala-43, Gly-52–Ile-74, Ala-84–Tyr-101, Leu-128–Tyr-148, Ile-150–Ile-170, and Ile-180–Val-200.

Belongs to the binding-protein-dependent transport system permease family. CysTW subfamily. In terms of assembly, the complex is composed of two ATP-binding proteins (OpuCA), two transmembrane proteins (OpuCB and OpuCD) and a solute-binding protein (OpuCC).

It is found in the cell membrane. Functionally, involved in a high affinity multicomponent binding-protein-dependent transport system for glycine betaine, carnitine and choline; probably responsible for the translocation of the substrate across the membrane. The chain is Glycine betaine/carnitine/choline transport system permease protein OpuCB (opuCB) from Bacillus subtilis (strain 168).